The chain runs to 912 residues: MASLIEKLLRTGDKKTLRQLRNYADSINALESSFQTFTDAELREETDRLRERHQDGEKLDDLLPEAFAAVREASSRTLGMRHFDVQLMGGAALHLGNIAEMKTGEGKTLVATAPAYLNALTGNGVHVITVNDYLAEYQSDLMGRVYRFLGLTSGCILSNQDPAVRREQYAADITYGTNNEFGFDYLRDNMAWDKSELVQRGHHFAIVDEVDSILIDEARTPLIISGPAQGDTNRWYSEFAKVVTRLKPDEDYEVDEKKRTVGVLEGGIEKVEDYLGIHNLYESANTPLIGFLNNAIKAKELFKRDKDYVILDGEVLIVDEHTGRILAGRRYNEGMHQAIEAKEGVEIKAENQTLATVTLQNYFRMYNKLSGMTGTAETEAAEFMSTYKLGVVAIPTNRDMQRIDQPDLVYKNEAVKFDAVVKDIAERHEKGQPVLVGTTSVEKSEYLSRLLAKEGIRHEVLNAKNHAREAAIVAQAGRKGAVTVATNMAGRGTDIMLGGNAEFTAVAELAAKGLDPEENSEEYEAAWPAAFEAAKQAVKDEHEEVLELGGLYVLGTERHESRRIDNQLRGRSGRQGDPGESRFYLSLTDDLMRLFNSGAAERLMNSSVPDDVALESKLVSRAIASAQGQVEGRNAEQRKNVLKYDDVLNRQREAIYGDRRRILEGDDLHEKVQFFLEDTITALIDAATSEGTGDDWDFNQLWTNLKTLYPVSVTSHDVIDEAGGKSRITVDFLKEEILSDARLVYQAREQAIGSESMRELERRVVLSVIGRKWQEHLYEMDYLKEGIGLRAMAQRDPLVEYQREGFIMFQAMMEAIREESVGFLFNLEVEVTPAEDVVVADGAGEHTEHHEPQIHAAGLEAPEKPAQLQYTAPGEDGASQTRVEGRSSGRSGNPAKAAQDGARKPAPKKKKR.

ATP-binding positions include glutamine 86, 104–108 (GEGKT), and aspartate 494. The interval 860 to 912 (EAPEKPAQLQYTAPGEDGASQTRVEGRSSGRSGNPAKAAQDGARKPAPKKKKR) is disordered.

The protein belongs to the SecA family. As to quaternary structure, monomer and homodimer. Part of the essential Sec protein translocation apparatus which comprises SecA, SecYEG and auxiliary proteins SecDF. Other proteins may also be involved.

The protein resides in the cell membrane. The protein localises to the cytoplasm. The enzyme catalyses ATP + H2O + cellular proteinSide 1 = ADP + phosphate + cellular proteinSide 2.. Functionally, part of the Sec protein translocase complex. Interacts with the SecYEG preprotein conducting channel. Has a central role in coupling the hydrolysis of ATP to the transfer of proteins into and across the cell membrane, serving as an ATP-driven molecular motor driving the stepwise translocation of polypeptide chains across the membrane. This Arthrobacter sp. (strain FB24) protein is Protein translocase subunit SecA.